A 372-amino-acid polypeptide reads, in one-letter code: N-methyl-L-tryptophan oxidase (372 aa).

4 to 34 (DLIIIGSGSVGAAAGYYATRAGLKVLMTDAH) contributes to the FAD binding site. Cysteine 307 carries the post-translational modification S-8alpha-FAD cysteine.

This sequence belongs to the MSOX/MTOX family. MTOX subfamily. As to quaternary structure, monomer. FAD serves as cofactor.

The enzyme catalyses N(alpha)-methyl-L-tryptophan + O2 + H2O = L-tryptophan + formaldehyde + H2O2. Catalyzes the oxidative demethylation of N-methyl-L-tryptophan. The sequence is that of N-methyl-L-tryptophan oxidase from Salmonella arizonae (strain ATCC BAA-731 / CDC346-86 / RSK2980).